Consider the following 140-residue polypeptide: Nucleoside diphosphate kinase (140 aa).

6 residues coordinate ATP: lysine 9, phenylalanine 57, arginine 85, threonine 91, arginine 102, and asparagine 112. The active-site Pros-phosphohistidine intermediate is histidine 115.

This sequence belongs to the NDK family. Homotetramer. It depends on Mg(2+) as a cofactor.

It is found in the cytoplasm. The enzyme catalyses a 2'-deoxyribonucleoside 5'-diphosphate + ATP = a 2'-deoxyribonucleoside 5'-triphosphate + ADP. The catalysed reaction is a ribonucleoside 5'-diphosphate + ATP = a ribonucleoside 5'-triphosphate + ADP. Functionally, major role in the synthesis of nucleoside triphosphates other than ATP. The ATP gamma phosphate is transferred to the NDP beta phosphate via a ping-pong mechanism, using a phosphorylated active-site intermediate. This is Nucleoside diphosphate kinase from Chlorobaculum parvum (strain DSM 263 / NCIMB 8327) (Chlorobium vibrioforme subsp. thiosulfatophilum).